The primary structure comprises 94 residues: MTDAVGSIDMPDAQDEAPDSKKSRKGGKRGKKGPLKRLALFYRQIVAELRKVVWPSRNQLTTYTTVVIIFVVIMIGLVTLIDYGFSHAAKYVFG.

Residues 1–32 (MTDAVGSIDMPDAQDEAPDSKKSRKGGKRGKK) are disordered. Residues 22–32 (KSRKGGKRGKK) are compositionally biased toward basic residues. A helical membrane pass occupies residues 65–85 (TVVIIFVVIMIGLVTLIDYGF).

This sequence belongs to the SecE/SEC61-gamma family. In terms of assembly, component of the Sec protein translocase complex. Heterotrimer consisting of SecY, SecE and SecG subunits. The heterotrimers can form oligomers, although 1 heterotrimer is thought to be able to translocate proteins. Interacts with the ribosome. Interacts with SecDF, and other proteins may be involved. Interacts with SecA.

Its subcellular location is the cell membrane. Essential subunit of the Sec protein translocation channel SecYEG. Clamps together the 2 halves of SecY. May contact the channel plug during translocation. This Streptomyces coelicolor (strain ATCC BAA-471 / A3(2) / M145) protein is Protein translocase subunit SecE.